We begin with the raw amino-acid sequence, 354 residues long: DNA polymerase IV (354 aa).

A UmuC domain is found at 6–187; sequence IIHVDCDCFY…LPVARLHGVG (182 aa). Residues aspartate 10 and aspartate 105 each contribute to the Mg(2+) site. Glutamate 106 is an active-site residue.

Belongs to the DNA polymerase type-Y family. Monomer. It depends on Mg(2+) as a cofactor.

It localises to the cytoplasm. The catalysed reaction is DNA(n) + a 2'-deoxyribonucleoside 5'-triphosphate = DNA(n+1) + diphosphate. Its function is as follows. Poorly processive, error-prone DNA polymerase involved in untargeted mutagenesis. Copies undamaged DNA at stalled replication forks, which arise in vivo from mismatched or misaligned primer ends. These misaligned primers can be extended by PolIV. Exhibits no 3'-5' exonuclease (proofreading) activity. May be involved in translesional synthesis, in conjunction with the beta clamp from PolIII. The sequence is that of DNA polymerase IV from Pseudomonas putida (strain ATCC 47054 / DSM 6125 / CFBP 8728 / NCIMB 11950 / KT2440).